Here is a 125-residue protein sequence, read N- to C-terminus: Large ribosomal subunit protein bL12 (125 aa).

Belongs to the bacterial ribosomal protein bL12 family. In terms of assembly, homodimer. Part of the ribosomal stalk of the 50S ribosomal subunit. Forms a multimeric L10(L12)X complex, where L10 forms an elongated spine to which 2 to 4 L12 dimers bind in a sequential fashion. Binds GTP-bound translation factors.

Forms part of the ribosomal stalk which helps the ribosome interact with GTP-bound translation factors. Is thus essential for accurate translation. This Helicobacter pylori (strain P12) protein is Large ribosomal subunit protein bL12.